A 226-amino-acid chain; its full sequence is Isoprenyl transferase (226 aa).

The active site involves aspartate 12. Aspartate 12 is a binding site for Mg(2+). Residues 13–16 (GNAR), tryptophan 17, lysine 25, histidine 29, and 57–59 (SSE) each bind substrate. Asparagine 60 (proton acceptor) is an active-site residue. Substrate is bound by residues tryptophan 61, arginine 63, arginine 174, and 180–182 (RIS). Glutamate 193 contributes to the Mg(2+) binding site.

It belongs to the UPP synthase family. In terms of assembly, homodimer. Requires Mg(2+) as cofactor.

Catalyzes the condensation of isopentenyl diphosphate (IPP) with allylic pyrophosphates generating different type of terpenoids. The protein is Isoprenyl transferase of Rickettsia typhi (strain ATCC VR-144 / Wilmington).